The chain runs to 183 residues: Putative calmodulin-like protein 2 (183 aa).

4 EF-hand domains span residues 7-42 (EQIA…LGQS), 43-78 (PTEA…KLRD), 80-115 (GAED…LGDP), and 116-151 (LSDD…KRRQ). Ca(2+) is bound by residues aspartate 20, aspartate 22, aspartate 24, threonine 26, glutamate 31, aspartate 56, aspartate 58, serine 60, serine 62, glutamate 67, aspartate 93, aspartate 95, asparagine 97, glutamate 104, aspartate 129, aspartate 131, aspartate 133, glutamine 135, and glutamate 140. The tract at residues 154-183 (MEGHGSGGHRSSNSHKKSGCCGPNSSCTIL) is disordered. Residues cysteine 173 and cysteine 174 are each lipidated (S-palmitoyl cysteine). Position 180 is a cysteine methyl ester (cysteine 180). Cysteine 180 carries the S-farnesyl cysteine lipid modification. Positions 181–183 (TIL) are cleaved as a propeptide — removed in mature form.

This sequence belongs to the calmodulin family.

It is found in the membrane. Its function is as follows. Potential calcium sensor. This Oryza sativa subsp. japonica (Rice) protein is Putative calmodulin-like protein 2 (CML2).